We begin with the raw amino-acid sequence, 215 residues long: Pyrrolidone-carboxylate peptidase (215 aa).

Catalysis depends on residues Glu-80, Cys-143, and His-167.

It belongs to the peptidase C15 family. As to quaternary structure, homotetramer.

Its subcellular location is the cytoplasm. The catalysed reaction is Release of an N-terminal pyroglutamyl group from a polypeptide, the second amino acid generally not being Pro.. Its function is as follows. Removes 5-oxoproline from various penultimate amino acid residues except L-proline. This chain is Pyrrolidone-carboxylate peptidase, found in Bacillus cereus (strain Q1).